A 329-amino-acid chain; its full sequence is Protein Brevis radix-like 4 (329 aa).

Positions 12–37 (SGTSRHHGQQRRGGSPPPRGRTTSVY) are disordered. The BRX 1 domain occupies 86–142 (REWVAQVEPGVQITFVSLAGGGGNDLKRIRFSREMYDKWQAQKWWGENNERIMELYN). Positions 151–263 (LPTPPRSDDG…TTSCSSRDEV (113 aa)) are disordered. Low complexity-rich tracts occupy residues 222-236 (SNPSERAWQQQQQPQ) and 243-252 (AAASDAMDAA). A compositionally biased stretch (polar residues) spans 253-263 (RTTSCSSRDEV). Residues 274-329 (TEWVIQDEPGVYITVRELADGTRELRRVRFSRERFAELNAKLWWEENKERIQAQYL) form the BRX 2 domain.

Belongs to the BRX family.

The protein resides in the nucleus. In Oryza sativa subsp. japonica (Rice), this protein is Protein Brevis radix-like 4 (BRXL4).